A 214-amino-acid chain; its full sequence is uncharacterized protein (214 aa).

The first 24 residues, 1–24, serve as a signal peptide directing secretion; it reads MVTPHGILLLTITAAASLLWITFA. The disordered stretch occupies residues 99–121; that stretch reads APNDTQEQNSTRNKRDSESYTAT. The span at 100–109 shows a compositional bias: polar residues; sequence PNDTQEQNST.

In terms of tissue distribution, component of the acid-insoluble and acid-soluble organic matrix of the aragonitic skeleton (at protein level).

It localises to the secreted. This is an uncharacterized protein from Acropora millepora (Staghorn coral).